The following is a 112-amino-acid chain: Ferredoxin-2 (112 aa).

2 4Fe-4S ferredoxin-type domains span residues 2-30 and 31-60; these read TYVV…YEGE and NTLV…PDTE. Residues C9 and C17 each coordinate [3Fe-4S] cluster. [4Fe-4S] cluster is bound by residues C21, C40, C43, and C46. C50 provides a ligand contact to [3Fe-4S] cluster. Residues 85 to 103 show a composition bias toward basic and acidic residues; that stretch reads DPMPDHKKYDGETGKREKY. A disordered region spans residues 85–112; that stretch reads DPMPDHKKYDGETGKREKYFSPNPGTGD.

Requires [4Fe-4S] cluster as cofactor. It depends on [3Fe-4S] cluster as a cofactor.

Functionally, ferredoxins are iron-sulfur proteins that transfer electrons in a wide variety of metabolic reactions. The polypeptide is Ferredoxin-2 (fdxA) (Rhodobacter capsulatus (strain ATCC BAA-309 / NBRC 16581 / SB1003)).